The primary structure comprises 327 residues: Putative pumilio homolog 19 (327 aa).

One can recognise a PUM-HD domain in the interval 1 to 324; it reads MAVSDNTFSM…NIANILDTFR (324 aa). Pumilio repeat units follow at residues 79 to 114, 115 to 149, 150 to 185, 186 to 222, 223 to 260, and 261 to 295; these read SDSDYFMSIVTTKFGSRRVQKLLGKSDDVDAFFCAA, ILRRFLHITTDKYASYVTIRAMVVFDKVMKKALYE, RILYHALDLACDQHGCIALNDIITDADDPYYRDQLL, ELVVSNALRLSNDASGNFVVQHVLTLYDSRCIHNIAV, NLYGQCIELSFKKYGSYIVEKLLEVEESMVVVVVELLG, and CDGDRLMRLARNEFGNFVVVKALRFTKEMRMDLFW.

It localises to the cytoplasm. Its function is as follows. Sequence-specific RNA-binding protein that regulates translation and mRNA stability by binding the 3'-UTR of target mRNAs. The protein is Putative pumilio homolog 19 (APUM19) of Arabidopsis thaliana (Mouse-ear cress).